The chain runs to 1451 residues: Glutamate receptor ionotropic, NMDA 2A (1451 aa).

A signal peptide spans Met-1–Gly-20. At Ala-21 to Ala-547 the chain is on the extracellular side. Asn-67 is a glycosylation site (N-linked (GlcNAc...) asparagine). An intrachain disulfide couples Cys-79 to Cys-312. Zn(2+) is bound by residues His-120, Asp-258, and Asp-274. Residues Asn-332, Asn-372, Asn-435, and Asn-436 are each glycosylated (N-linked (GlcNAc...) asparagine). 2 cysteine pairs are disulfide-bonded: Cys-421–Cys-447 and Cys-428–Cys-448. Ser-503, Thr-505, and Arg-510 together coordinate L-glutamate. N-linked (GlcNAc...) asparagine glycosylation occurs at Asn-533. A helical membrane pass occupies residues Ser-548 to Phe-568. Over Glu-569–Thr-592 the chain is Cytoplasmic. The tract at residues Phe-591–Gln-612 is pore-forming. The segment at residues Ile-593–Gln-612 is an intramembrane region (discontinuously helical). Topologically, residues Asn-613–Thr-617 are cytoplasmic. A helical membrane pass occupies residues Thr-618 to Tyr-637. Residues Thr-638–Asn-808 lie on the Extracellular side of the membrane. Residue Asn-679 is glycosylated (N-linked (GlcNAc...) asparagine). Residues Ser-681, Thr-682, and Asp-723 each contribute to the L-glutamate site. A disulfide bridge connects residues Cys-737 and Cys-792. A helical transmembrane segment spans residues Met-809 to Trp-829. The Cytoplasmic portion of the chain corresponds to Glu-830–Val-1451. Polar residues predominate over residues Thr-1011–Asn-1022. Disordered regions lie at residues Thr-1011–Lys-1080 and Asn-1100–Pro-1165. 3 stretches are compositionally biased toward basic and acidic residues: residues Cys-1055–Lys-1073, Asn-1100–Pro-1113, and Tyr-1138–Glu-1149.

It belongs to the glutamate-gated ion channel (TC 1.A.10.1) family. Heterotetramer. Forms heterotetrameric channels composed of two GluN1/zeta subunits (GRIN1), and two identical GluN2/epsilon subunits (GRIN2A, GRIN2B, GRIN2C or GRIN2D) or GluN3 subunits (GRIN3A or GRIN3B) (in vitro). In vivo, the subunit composition may depend on the expression levels of the different subunits.

The protein localises to the cell membrane. The protein resides in the postsynaptic cell membrane. It catalyses the reaction Ca(2+)(in) = Ca(2+)(out). It carries out the reaction Na(+)(in) = Na(+)(out). The enzyme catalyses K(+)(in) = K(+)(out). Component of N-methyl-D-aspartate (NMDA) receptors (NMDARs) that function as heterotetrameric, ligand-gated cation channels with high calcium permeability and voltage-dependent block by Mg(2+). MDARs participate in synaptic plasticity. Channel activation requires binding of the neurotransmitter L-glutamate to the GluN2 subunit, glycine binding to the GluN1 subunit, plus membrane depolarization to eliminate channel inhibition by Mg(2+). NMDARs mediate simultaneously the potasium efflux and the influx of calcium and sodium. Each GluN2 subunit confers differential attributes to channel properties, including activation, deactivation and desensitization kinetics, pH sensitivity, Ca2(+) permeability, and binding to allosteric modulators. Plays a role in dendritic branching in brain neurons and in synaptic plasticity. This is Glutamate receptor ionotropic, NMDA 2A from Xenopus laevis (African clawed frog).